Here is a 259-residue protein sequence, read N- to C-terminus: UPF0246 protein PFL_1025 (259 aa).

Belongs to the UPF0246 family.

The protein is UPF0246 protein PFL_1025 of Pseudomonas fluorescens (strain ATCC BAA-477 / NRRL B-23932 / Pf-5).